Here is a 192-residue protein sequence, read N- to C-terminus: Fe/S biogenesis protein NfuA (192 aa).

[4Fe-4S] cluster contacts are provided by C149 and C152.

This sequence belongs to the NfuA family. As to quaternary structure, homodimer. Requires [4Fe-4S] cluster as cofactor.

In terms of biological role, involved in iron-sulfur cluster biogenesis. Binds a 4Fe-4S cluster, can transfer this cluster to apoproteins, and thereby intervenes in the maturation of Fe/S proteins. Could also act as a scaffold/chaperone for damaged Fe/S proteins. The polypeptide is Fe/S biogenesis protein NfuA (Shewanella sp. (strain MR-7)).